Reading from the N-terminus, the 95-residue chain is U8-barytoxin-Tl1a (95 aa).

Positions 1-21 are cleaved as a signal peptide; the sequence is MKTLVLVAVLGLASLYLLSYA. A propeptide spanning residues 22–50 is cleaved from the precursor; it reads SEVQQLSVAEEEFGALIDAFGGLLETEER. 3 cysteine pairs are disulfide-bonded: Cys-57–Cys-71, Cys-64–Cys-76, and Cys-70–Cys-86.

It belongs to the neurotoxin 10 (Hwtx-1) family. 26 (ICK-1) subfamily. As to expression, expressed by the venom gland.

It localises to the secreted. Its function is as follows. Ion channel inhibitor. This is U8-barytoxin-Tl1a from Trittame loki (Brush-footed trapdoor spider).